A 357-amino-acid chain; its full sequence is sn-glycerol-3-phosphate import ATP-binding protein UgpC (357 aa).

Residues 4–235 (LKLQAVTKSY…PASLFVASFI (232 aa)) form the ABC transporter domain. An ATP-binding site is contributed by 37–44 (GPSGCGKS).

Belongs to the ABC transporter superfamily. sn-glycerol-3-phosphate importer (TC 3.A.1.1.3) family. The complex is composed of two ATP-binding proteins (UgpC), two transmembrane proteins (UgpA and UgpE) and a solute-binding protein (UgpB).

The protein localises to the cell inner membrane. The enzyme catalyses sn-glycerol 3-phosphate(out) + ATP + H2O = sn-glycerol 3-phosphate(in) + ADP + phosphate + H(+). Part of the ABC transporter complex UgpBAEC involved in sn-glycerol-3-phosphate (G3P) import. Responsible for energy coupling to the transport system. The chain is sn-glycerol-3-phosphate import ATP-binding protein UgpC from Yersinia pseudotuberculosis serotype I (strain IP32953).